The chain runs to 263 residues: Tropinone reductase homolog At2g29300 (263 aa).

Residue 13-37 (LVTGAASGIGYAIVEELAGFGARIH) participates in NADP(+) binding. Ser146 provides a ligand contact to substrate. Tyr160 acts as the Proton acceptor in catalysis.

The protein belongs to the short-chain dehydrogenases/reductases (SDR) family. SDR65C subfamily.

In Arabidopsis thaliana (Mouse-ear cress), this protein is Tropinone reductase homolog At2g29300.